A 563-amino-acid chain; its full sequence is MRKRRTLTAPSHFNSMSAALNPMKMAAMQSQPTVDDSWAASISRIMSLTAGDRHKFSSQPFANRLDAILEAVVPSRKDPTHEKVLTIVNALIENGAIRRDEGAGVYDALLHRVSKYNSINTQSNLERLAGDVREAVAQQVRIAAGNLGSLTALNSFLARLPANVERGQDNYTGFLSALKLLVSEVPNTEVYQSGPHYFLQSSRNGTQTVNLTNAFENLKPLWGVKAPTMERLSISALLTPNTRLLLLLVSPFTDSVSISRDSYLGYLLTLYREALGRNHLDERTLEEVTEVSKAMGNENINNLQATLNFLLTNRQKKIPKDYSLTPEEERIVRFIQQAVSLRMMQENLSPTEALDVTAANMEPSFYANNRDFINKLMDYFHRAAAIAPDYFLGAVMNPRWLPPEGFFTGVFDFPERDNYIWDGPDSSLDLTRQDAMRFLEEKFIDDDQRTESRSVSRVPTPASSRRSSVAMASDSLIRPMNNDKNSLREIEVLADKLARWKTYKRESEEARESLPVVVRPKKYSSAISSDESDDGMSKPDKFLKFEGSGNPFAHLRPKLGRCL.

A peripentonal hexon-tethering domain region spans residues 1–117; that stretch reads MRKRRTLTAP…ALLHRVSKYN (117 aa). The interval 148 to 261 is binding to hexon-linking protein; the sequence is GSLTALNSFL…FTDSVSISRD (114 aa). The residue at position 235 (Ser235) is a Phosphoserine; by host. Residue Thr284 is modified to Phosphothreonine; by host. Residues 449–472 are disordered; the sequence is RTESRSVSRVPTPASSRRSSVAMA. A phosphoserine; by host mark is found at Ser452 and Ser456. A compositionally biased stretch (low complexity) spans 462–472; it reads ASSRRSSVAMA. Ser475 and Ser486 each carry phosphoserine; by host. Positions 522–543 are disordered; sequence KYSSAISSDESDDGMSKPDKFL. A propeptide spanning residues 549 to 563 is cleaved from the precursor; sequence GNPFAHLRPKLGRCL.

It belongs to the adenoviridae hexon-linking protein IIIa family. In terms of assembly, interacts with hexon proteins; this interaction tethers the peripentonal hexons to hexons situated in the facet. Interacts with the penton protein (via N-terminus). Interacts with packaging protein 3; this interaction is required to promote correct genome packaging. Post-translationally, cleaved near the C-terminus by the viral protease during virion maturation to form the mature protein.

It is found in the virion. Its subcellular location is the host nucleus. Its function is as follows. Structural component of the virion that acts as a cement protein on the capsid exterior which mediates the interactions between the hexons, including the peripentonal hexons, and reaches all the way to the penton vertices. Two hexon linking proteins IIIa, one from each facet, stabilize the unique edge interface between a pair of facets. As the virus enters the host cell, hexon linking proteins IIIa are shed concomitant with virion acidification in the endosome. During virus assembly, seems to play a role in the serotype specificity of the packaging of viral DNA via its interaction with packaging protein 3. The sequence is that of Pre-hexon-linking protein IIIa from Canis lupus familiaris (Dog).